The following is a 120-amino-acid chain: Fumarate reductase subunit D (120 aa).

The next 3 helical transmembrane spans lie at 25-45 (FAML…LGVI), 55-75 (VAGF…ISMP), and 100-120 (IACY…IFMI).

Belongs to the FrdD family. In terms of assembly, part of an enzyme complex containing four subunits: a flavoprotein (FrdA), an iron-sulfur protein (FrdB), and two hydrophobic anchor proteins (FrdC and FrdD).

It localises to the cell inner membrane. In terms of biological role, anchors the catalytic components of the fumarate reductase complex to the cell membrane, binds quinones. In Aliivibrio salmonicida (strain LFI1238) (Vibrio salmonicida (strain LFI1238)), this protein is Fumarate reductase subunit D.